A 305-amino-acid chain; its full sequence is MMMNRQQIDSLVQQMNVATATGEVNLRVQQIVVRLLGDLFQAIEDLNMSQTELWKGLEYLTDAGQANELGLLAAGLGLEHYLDLRADEADAKAGITGGTPRTIEGPLYVAGAPESVGFARMDDGSESAHVDALIIEGNVTDTAGQIIPNAKVEIWHANSLGNYSFFDKSQSAFNLRRSIFTDTQGQYIAQTTMPVGYGCPPEGTTQALLNLLGRHGNRPSHVHYFVSAPGYRKLTTQFNIEGDKYLWDDFAFATRDGLIATALDVTDLAKIKQYNLNKAFKHIKFNFQLVQDADQVPLQRLIVVE.

4 residues coordinate Fe cation: tyrosine 163, tyrosine 197, histidine 221, and histidine 223.

It belongs to the intradiol ring-cleavage dioxygenase family. As to quaternary structure, homodimer. It depends on Fe(3+) as a cofactor.

The enzyme catalyses catechol + O2 = cis,cis-muconate + 2 H(+). It functions in the pathway aromatic compound metabolism; beta-ketoadipate pathway; 5-oxo-4,5-dihydro-2-furylacetate from catechol: step 1/3. The sequence is that of Catechol 1,2-dioxygenase (catA) from Acinetobacter guillouiae (Acinetobacter genomosp. 11).